Here is a 70-residue protein sequence, read N- to C-terminus: uncharacterized protein (70 aa).

It is found in the plastid. This is an uncharacterized protein from Euglena longa (Euglenophycean alga).